A 520-amino-acid polypeptide reads, in one-letter code: MSLSILIAGASFIGLLTYYIWIWSFWIRKGVKGPRGFPFFGVIHEFQDYENPGLLKLGEWTKEYGPIYGITEGVEKTLIVSNPEFVHEVFVKQFDNFYGRKTNPIQGDPNKNKRAHLVSAQGHRWKRLRTLSSPTFSNKNLRKIMSTVEETVVELMRHLDDASAKGKAVDLLDYYQEFTLDIIGRIAMGQTESLMFRNPMLPKVKGIFKDGRKLPFLVSGIFPIAGTMFREFFMRFPSIQPAFDIMSTVEKALNKRLEQRAADEKAGIEPSGEPQDFIDLFLDARANVDFFEEESALGFAKTEIAKVDKQLTFDEIIGQLFVFLLAGYDTTALSLSYSSYLLARHPEIQKKLQEEVDRECPNPEVTFDQISKLKYMECVVKEALRMYPLASIVHNRKCMKETNVLGVQIEKGTNVQVDTWTLHYDPKVWGEDANEFRPERWESGDELFYAKGGYLPFGMGPRICIGMRLAMMEKKMLLTHILKKYTFETSTQTEIPLKLVGSATTAPRSVMLKLTPRHSN.

Position 464 (Cys464) interacts with heme.

This sequence belongs to the cytochrome P450 family. Heme serves as cofactor.

Functionally, cytochromes P450 are a group of heme-thiolate monooxygenases. They oxidize a variety of structurally unrelated compounds, including steroids, fatty acids, and xenobiotics. In Caenorhabditis elegans, this protein is Putative cytochrome P450 CYP13A5 (cyp-13A5).